The primary structure comprises 734 residues: MENKKTKLTLSGIAKKSIENIELAKTQSKNSVVIEKKPSKFAPRSSFTRPASVRSKPAVSTTSSFPPRTASVPKPASPITNDYEKRKLAEQRATRRLKGDTGKPETKKRELKLTVSRALSDEIEARSRSMASLKRAKLKENRELTKEEIQESLKPVKRDVNIPEAITVRELSNRMAEQSSNVIKHLFGMGVTVTINQTLAADTAEYLVKEFGHNPIRETKAEEIIQKIKESRSENLKNRPPIVTVMGHVDHGKTSVLDVLRSANVVSGEFGGITQHIGAYQIQHESNKLTFIDTPGHAAFTEMRARGSKLTDVVVLVVAADDGVKPQTIESIKHAKAANVPIVVAINKCDLPEADPQKIKNQLLEYELIAEDLSGDTLMVEISAKNKKNLDKLVESIVLQAEILDLKTDFESKATGIVLESKIDIGRGAVATVVVTSGTIKKGDFFVSGLKWGKVRALINDKGENVNEAPPSMPVEILGINGAAKSGDDFIVLDSEKEAKTLSQNRAEESKTGGSPLTFATQDSAFADKSAAELNIIVKSDVHGSAEAIKSAINQITHDEVKPKIILSDIGMVTETDVTLAKASNAALIAFNVKPSKEAKKLAENEKIVISSYNIIYEVLDYIKLRMSGLLAPDVQEKIIGTAQILEIFKVSGTGKVAGSKVTEGEITSGASARVVRDGAIIYTGKISTIFREKDQAKQVSNGQECGITLKDFIDFQKNDTIEAFSTTTTDRTV.

A disordered region spans residues 39–110; that stretch reads SKFAPRSSFT…TGKPETKKRE (72 aa). The span at 82 to 110 shows a compositional bias: basic and acidic residues; it reads DYEKRKLAEQRATRRLKGDTGKPETKKRE. The region spanning 238-405 is the tr-type G domain; sequence NRPPIVTVMG…SIVLQAEILD (168 aa). The segment at 247–254 is G1; it reads GHVDHGKT. 247-254 lines the GTP pocket; that stretch reads GHVDHGKT. A G2 region spans residues 272 to 276; the sequence is GITQH. Positions 293-296 are G3; the sequence is DTPG. GTP-binding positions include 293-297 and 347-350; these read DTPGH and NKCD. Residues 347–350 form a G4 region; sequence NKCD. The tract at residues 383–385 is G5; sequence SAK.

It belongs to the TRAFAC class translation factor GTPase superfamily. Classic translation factor GTPase family. IF-2 subfamily.

Its subcellular location is the cytoplasm. One of the essential components for the initiation of protein synthesis. Protects formylmethionyl-tRNA from spontaneous hydrolysis and promotes its binding to the 30S ribosomal subunits. Also involved in the hydrolysis of GTP during the formation of the 70S ribosomal complex. The protein is Translation initiation factor IF-2 of Pelagibacter ubique (strain HTCC1062).